The primary structure comprises 211 residues: Thiamine-phosphate synthase (211 aa).

4-amino-2-methyl-5-(diphosphooxymethyl)pyrimidine contacts are provided by residues 37–41 (QLRIK) and asparagine 69. Positions 70 and 89 each coordinate Mg(2+). Residue serine 108 coordinates 4-amino-2-methyl-5-(diphosphooxymethyl)pyrimidine. 134 to 136 (TQT) is a binding site for 2-[(2R,5Z)-2-carboxy-4-methylthiazol-5(2H)-ylidene]ethyl phosphate. Lysine 137 is a binding site for 4-amino-2-methyl-5-(diphosphooxymethyl)pyrimidine. Residues glycine 166 and 186–187 (VS) contribute to the 2-[(2R,5Z)-2-carboxy-4-methylthiazol-5(2H)-ylidene]ethyl phosphate site.

This sequence belongs to the thiamine-phosphate synthase family. It depends on Mg(2+) as a cofactor.

It catalyses the reaction 2-[(2R,5Z)-2-carboxy-4-methylthiazol-5(2H)-ylidene]ethyl phosphate + 4-amino-2-methyl-5-(diphosphooxymethyl)pyrimidine + 2 H(+) = thiamine phosphate + CO2 + diphosphate. The catalysed reaction is 2-(2-carboxy-4-methylthiazol-5-yl)ethyl phosphate + 4-amino-2-methyl-5-(diphosphooxymethyl)pyrimidine + 2 H(+) = thiamine phosphate + CO2 + diphosphate. The enzyme catalyses 4-methyl-5-(2-phosphooxyethyl)-thiazole + 4-amino-2-methyl-5-(diphosphooxymethyl)pyrimidine + H(+) = thiamine phosphate + diphosphate. It participates in cofactor biosynthesis; thiamine diphosphate biosynthesis; thiamine phosphate from 4-amino-2-methyl-5-diphosphomethylpyrimidine and 4-methyl-5-(2-phosphoethyl)-thiazole: step 1/1. Its function is as follows. Condenses 4-methyl-5-(beta-hydroxyethyl)thiazole monophosphate (THZ-P) and 2-methyl-4-amino-5-hydroxymethyl pyrimidine pyrophosphate (HMP-PP) to form thiamine monophosphate (TMP). This chain is Thiamine-phosphate synthase, found in Escherichia coli (strain SE11).